The chain runs to 443 residues: Tubulin beta-2 chain (443 aa).

Positions 1 to 4 (MREI) match the MREI motif motif. GTP contacts are provided by Gln-11, Glu-69, Ser-138, Gly-142, Thr-143, Gly-144, Asn-204, and Asn-226. Residue Glu-69 participates in Mg(2+) binding. At Glu-438 the chain carries 5-glutamyl polyglutamate.

The protein belongs to the tubulin family. As to quaternary structure, dimer of alpha and beta chains. A typical microtubule is a hollow water-filled tube with an outer diameter of 25 nm and an inner diameter of 15 nM. Alpha-beta heterodimers associate head-to-tail to form protofilaments running lengthwise along the microtubule wall with the beta-tubulin subunit facing the microtubule plus end conferring a structural polarity. Microtubules usually have 13 protofilaments but different protofilament numbers can be found in some organisms and specialized cells. Mg(2+) serves as cofactor. Post-translationally, some glutamate residues at the C-terminus are polyglycylated, resulting in polyglycine chains on the gamma-carboxyl group. Glycylation is mainly limited to tubulin incorporated into axonemes (cilia and flagella) whereas glutamylation is prevalent in neuronal cells, centrioles, axonemes, and the mitotic spindle. Both modifications can coexist on the same protein on adjacent residues, and lowering polyglycylation levels increases polyglutamylation, and reciprocally. The precise function of polyglycylation is still unclear. Some glutamate residues at the C-terminus are polyglutamylated, resulting in polyglutamate chains on the gamma-carboxyl group. Polyglutamylation plays a key role in microtubule severing by spastin (SPAST). SPAST preferentially recognizes and acts on microtubules decorated with short polyglutamate tails: severing activity by SPAST increases as the number of glutamates per tubulin rises from one to eight, but decreases beyond this glutamylation threshold. In terms of tissue distribution, nervous system specific.

It is found in the cytoplasm. Its subcellular location is the cytoskeleton. In terms of biological role, tubulin is the major constituent of microtubules, a cylinder consisting of laterally associated linear protofilaments composed of alpha- and beta-tubulin heterodimers. Microtubules grow by the addition of GTP-tubulin dimers to the microtubule end, where a stabilizing cap forms. Below the cap, tubulin dimers are in GDP-bound state, owing to GTPase activity of alpha-tubulin. The sequence is that of Tubulin beta-2 chain (tubb2) from Xenopus laevis (African clawed frog).